We begin with the raw amino-acid sequence, 334 residues long: HTH-type transcriptional repressor PurR (334 aa).

The HTH lacI-type domain occupies 2–56 (ATIKDVARMAGVSTTTVSHVINKTRFVAEATQKKVLAAVDDLNYAPSAVARSLKC). A DNA-binding region (H-T-H motif) is located at residues 4–23 (IKDVARMAGVSTTTVSHVIN). The DNA-binding element occupies 48–56 (SAVARSLKC). Residues F73, K189, T191, F220, and D274 each contribute to the hypoxanthine site.

Homodimer.

It participates in purine metabolism; purine nucleotide biosynthesis [regulation]. Its function is as follows. Is the main repressor of the genes involved in the de novo synthesis of purine nucleotides, regulating purB, purC, purEK, purF, purHD, purL, purMN and guaBA expression. PurR is allosterically activated to bind its cognate DNA by binding the purine corepressors, hypoxanthine or guanine, thereby effecting transcription repression. This is HTH-type transcriptional repressor PurR from Photobacterium profundum (strain SS9).